Reading from the N-terminus, the 316-residue chain is FAD:protein FMN transferase (316 aa).

FAD contacts are provided by residues M14, 88-90 (AFN), and D146. A149 is a binding site for Mg(2+). The FAD site is built by K152 and L231. 2 residues coordinate Mg(2+): D257 and T261.

Belongs to the ApbE family. Requires Mg(2+) as cofactor.

The protein localises to the cytoplasm. It catalyses the reaction L-threonyl-[protein] + FAD = FMN-L-threonyl-[protein] + AMP + H(+). Functionally, flavin transferase that catalyzes the transfer of the FMN moiety of FAD and its covalent binding to the hydroxyl group of a threonine residue in a target flavoprotein. Is responsible for the modification of the fumarate reductase KPK_2907. This Klebsiella pneumoniae (strain 342) protein is FAD:protein FMN transferase.